Reading from the N-terminus, the 89-residue chain is MAKKSWIARDKKKAETVKRYAELRAQLKAEKDYIGLTMLPRNASPTRTVNRCLVSGRRRAFIRRFKLSRISFRELANAGMIPGVTKSSW.

Belongs to the universal ribosomal protein uS14 family. In terms of assembly, part of the 30S ribosomal subunit. Contacts proteins S3 and S10.

In terms of biological role, binds 16S rRNA, required for the assembly of 30S particles and may also be responsible for determining the conformation of the 16S rRNA at the A site. This Akkermansia muciniphila (strain ATCC BAA-835 / DSM 22959 / JCM 33894 / BCRC 81048 / CCUG 64013 / CIP 107961 / Muc) protein is Small ribosomal subunit protein uS14.